A 327-amino-acid polypeptide reads, in one-letter code: Aldo/keto reductase slr0942 (327 aa).

18 to 27 provides a ligand contact to NADP(+); it reads GEQIPALGLG. Y57 (proton donor) is an active-site residue. H119 is a substrate binding site. NADP(+) is bound at residue 216–280; sequence SPLGSGDRPA…SVNPERLEQN (65 aa).

This sequence belongs to the aldo/keto reductase family. In terms of assembly, monomer.

The catalysed reaction is a secondary alcohol + NADP(+) = a ketone + NADPH + H(+). Curcumin non-competitively inhibits the enzyme with respect to furfural. To a lesser extent, enzyme activity is also inhibited by indomethacin, coumarate, coumarin, and alrestatin. Its function is as follows. Aldo/keto reductase with broad substrate spectrum. Catalyzes the NADPH-dependent reduction of aldehyde- and ketone-groups of different classes of carbonyl compounds to the corresponding alcohols. Highest enzymatic efficiency is observed with 4-oxonon-2-enal (4-ONE) and 4-hydroxynon-2-enal (4-HNE), that are lipid peroxidation products, and 9,10-phenanthrenequinone (9,10-PQ), a photoproduct of phenanthrene that is one of the most prevalent polycyclic aromatic hydrocarbons in the environment. Is also active on sugar-derived reactive carbonyls such as methylglyoxal (MG), glyoxal and 3-deoxyglucosone (3-DG), and on other lipid-derived carbonyls such as acrolein. May be involved in the detoxification of the toxic lipid peroxidation products 4-ONE and 4-HNE besides many other exo- and endogenic reactive carbonyl compounds (RCs) that may lead to photoinhibition or other cell damages. This Synechocystis sp. (strain ATCC 27184 / PCC 6803 / Kazusa) protein is Aldo/keto reductase slr0942.